We begin with the raw amino-acid sequence, 290 residues long: Dual-specificity RNA pseudouridine synthase RluF (290 aa).

Residues 7-72 (VRLNKYISES…EAEDLVLIAL (66 aa)) enclose the S4 RNA-binding domain. Interaction with RNA stretches follow at residues 105–108 (RLDK) and 187–190 (RQIR). Catalysis depends on aspartate 107, which acts as the Nucleophile. A disordered region spans residues 241-290 (SEAKPKAKAKPKTAGIKRPVVKMEKTAEKGGRPASNGKRFTSPGRKKKGR). Residues 261–271 (VKMEKTAEKGG) show a composition bias toward basic and acidic residues.

Belongs to the pseudouridine synthase RsuA family. Monomer.

The catalysed reaction is uridine(2604) in 23S rRNA = pseudouridine(2604) in 23S rRNA. It carries out the reaction uridine(35) in tRNA(Tyr) = pseudouridine(35) in tRNA(Tyr). Its function is as follows. Dual specificity enzyme that catalyzes the synthesis of pseudouridine from uracil-2604 in 23S ribosomal RNA and from uracil-35 in the anticodon of tRNA(Tyr). This is Dual-specificity RNA pseudouridine synthase RluF (rluF) from Escherichia coli O157:H7.